Consider the following 314-residue polypeptide: Methionyl-tRNA formyltransferase (314 aa).

113 to 116 lines the (6S)-5,6,7,8-tetrahydrofolate pocket; that stretch reads SILP.

Belongs to the Fmt family.

It catalyses the reaction L-methionyl-tRNA(fMet) + (6R)-10-formyltetrahydrofolate = N-formyl-L-methionyl-tRNA(fMet) + (6S)-5,6,7,8-tetrahydrofolate + H(+). Attaches a formyl group to the free amino group of methionyl-tRNA(fMet). The formyl group appears to play a dual role in the initiator identity of N-formylmethionyl-tRNA by promoting its recognition by IF2 and preventing the misappropriation of this tRNA by the elongation apparatus. This is Methionyl-tRNA formyltransferase from Photobacterium profundum (strain SS9).